A 275-amino-acid polypeptide reads, in one-letter code: Cytochrome c oxidase subunit 3 (275 aa).

The next 7 membrane-spanning stretches (helical) occupy residues 22–42 (PWPL…VMYF), 52–72 (SGAL…ALWF), 96–116 (GVAL…WAFF), 132–152 (PVGI…ILLL), 173–193 (AILG…CQGI), 211–231 (FFFS…FIAV), and 253–273 (ILYW…VYWW).

Belongs to the cytochrome c oxidase subunit 3 family. Component of the cytochrome c oxidase (complex IV, CIV), a multisubunit enzyme composed of a catalytic core of 3 subunits and several supernumerary subunits. The complex exists as a monomer or a dimer and forms supercomplexes (SCs) in the inner mitochondrial membrane with ubiquinol-cytochrome c oxidoreductase (cytochrome b-c1 complex, complex III, CIII).

The protein resides in the mitochondrion inner membrane. It catalyses the reaction 4 Fe(II)-[cytochrome c] + O2 + 8 H(+)(in) = 4 Fe(III)-[cytochrome c] + 2 H2O + 4 H(+)(out). Component of the cytochrome c oxidase, the last enzyme in the mitochondrial electron transport chain which drives oxidative phosphorylation. The respiratory chain contains 3 multisubunit complexes succinate dehydrogenase (complex II, CII), ubiquinol-cytochrome c oxidoreductase (cytochrome b-c1 complex, complex III, CIII) and cytochrome c oxidase (complex IV, CIV), that cooperate to transfer electrons derived from NADH and succinate to molecular oxygen, creating an electrochemical gradient over the inner membrane that drives transmembrane transport and the ATP synthase. Cytochrome c oxidase is the component of the respiratory chain that catalyzes the reduction of oxygen to water. Electrons originating from reduced cytochrome c in the intermembrane space (IMS) are transferred via the dinuclear copper A center (CU(A)) of subunit 2 and heme A of subunit 1 to the active site in subunit 1, a binuclear center (BNC) formed by heme A3 and copper B (CU(B)). The BNC reduces molecular oxygen to 2 water molecules using 4 electrons from cytochrome c in the IMS and 4 protons from the mitochondrial matrix. This is Cytochrome c oxidase subunit 3 (COX3) from Mycosarcoma maydis (Corn smut fungus).